We begin with the raw amino-acid sequence, 753 residues long: 5-methyltetrahydropteroyltriglutamate--homocysteine methyltransferase (753 aa).

5-methyltetrahydropteroyltri-L-glutamate contacts are provided by residues 17 to 20 (RELK) and Lys-117. Residues 431–433 (IGS) and Glu-484 contribute to the L-homocysteine site. Residues 431–433 (IGS) and Glu-484 contribute to the L-methionine site. Residues 515-516 (RC) and Trp-561 contribute to the 5-methyltetrahydropteroyltri-L-glutamate site. An L-homocysteine-binding site is contributed by Asp-599. Asp-599 lines the L-methionine pocket. Glu-605 is a binding site for 5-methyltetrahydropteroyltri-L-glutamate. Zn(2+) contacts are provided by His-641, Cys-643, and Glu-665. Residue His-694 is the Proton donor of the active site. Cys-726 provides a ligand contact to Zn(2+).

Belongs to the vitamin-B12 independent methionine synthase family. Zn(2+) serves as cofactor.

The enzyme catalyses 5-methyltetrahydropteroyltri-L-glutamate + L-homocysteine = tetrahydropteroyltri-L-glutamate + L-methionine. It functions in the pathway amino-acid biosynthesis; L-methionine biosynthesis via de novo pathway; L-methionine from L-homocysteine (MetE route): step 1/1. Catalyzes the transfer of a methyl group from 5-methyltetrahydrofolate to homocysteine resulting in methionine formation. In Escherichia coli O157:H7 (strain EC4115 / EHEC), this protein is 5-methyltetrahydropteroyltriglutamate--homocysteine methyltransferase.